Reading from the N-terminus, the 426-residue chain is Serine--tRNA ligase (426 aa).

231–233 (TSE) is a binding site for L-serine. 262-264 (RSE) lines the ATP pocket. Glutamate 285 provides a ligand contact to L-serine. Residue 349 to 352 (EISS) coordinates ATP. Serine 385 lines the L-serine pocket.

This sequence belongs to the class-II aminoacyl-tRNA synthetase family. Type-1 seryl-tRNA synthetase subfamily. In terms of assembly, homodimer. The tRNA molecule binds across the dimer.

Its subcellular location is the cytoplasm. The catalysed reaction is tRNA(Ser) + L-serine + ATP = L-seryl-tRNA(Ser) + AMP + diphosphate + H(+). It carries out the reaction tRNA(Sec) + L-serine + ATP = L-seryl-tRNA(Sec) + AMP + diphosphate + H(+). Its pathway is aminoacyl-tRNA biosynthesis; selenocysteinyl-tRNA(Sec) biosynthesis; L-seryl-tRNA(Sec) from L-serine and tRNA(Sec): step 1/1. Functionally, catalyzes the attachment of serine to tRNA(Ser). Is also able to aminoacylate tRNA(Sec) with serine, to form the misacylated tRNA L-seryl-tRNA(Sec), which will be further converted into selenocysteinyl-tRNA(Sec). This chain is Serine--tRNA ligase, found in Legionella pneumophila (strain Paris).